The chain runs to 48 residues: Glycine-rich RNA-binding protein 2 (48 aa).

In Populus euphratica (Euphrates poplar), this protein is Glycine-rich RNA-binding protein 2.